The chain runs to 130 residues: Small ribosomal subunit protein uS8 (130 aa).

It belongs to the universal ribosomal protein uS8 family. In terms of assembly, part of the 30S ribosomal subunit.

Its function is as follows. One of the primary rRNA binding proteins, it binds directly to 16S rRNA central domain where it helps coordinate assembly of the platform of the 30S subunit. The chain is Small ribosomal subunit protein uS8 from Cenarchaeum symbiosum (strain A).